The primary structure comprises 481 residues: Zygotic gap protein knirps (481 aa).

A DNA-binding region (nuclear receptor) is located at residues 2–78; sequence NQTCKVCGEP…VGMSKGGSRY (77 aa). 2 consecutive NR C4-type zinc fingers follow at residues 5–25 and 42–66; these read CKVCGEPAAGFHFGAFTCEGC and CKNDGKCIIDKKNRTTCKACRLRKC. Composition is skewed to low complexity over residues 100–111, 127–148, 245–264, 316–335, and 420–440; these read AAAGKAPGHATG, QQQQQQHQQQQQQQHQHQQQQQ, TPPTVATVPQQSQPQPAASP, SHSSSASPTPSKSQSSSPLS, and TTNSCSSSTSTSSSNSSTSST. Disordered stretches follow at residues 100–161, 231–294, 308–336, and 420–442; these read AAAG…GYTG, SVDS…PHTI, LLPGLTTASHSSSASPTPSKSQSSSPLSF, and TTNSCSSSTSTSSSNSSTSSTEA.

It belongs to the nuclear hormone receptor family. NR0 subfamily.

It localises to the nucleus. Transcriptional repressor. Binds to multiple sites in the eve stripe 3 enhancer element. Plays an essential role in the segmentation process both by refining the expression patterns of gap genes and by establishing pair-rules stripes of gene expression. This chain is Zygotic gap protein knirps (kni), found in Drosophila virilis (Fruit fly).